A 70-amino-acid polypeptide reads, in one-letter code: DNA-directed RNA polymerase subunit omega (70 aa).

It belongs to the RNA polymerase subunit omega family. The RNAP catalytic core consists of 2 alpha, 1 beta, 1 beta' and 1 omega subunit. When a sigma factor is associated with the core the holoenzyme is formed, which can initiate transcription.

It carries out the reaction RNA(n) + a ribonucleoside 5'-triphosphate = RNA(n+1) + diphosphate. Promotes RNA polymerase assembly. Latches the N- and C-terminal regions of the beta' subunit thereby facilitating its interaction with the beta and alpha subunits. The protein is DNA-directed RNA polymerase subunit omega of Bacillus cytotoxicus (strain DSM 22905 / CIP 110041 / 391-98 / NVH 391-98).